Consider the following 429-residue polypeptide: Ribosomal RNA small subunit methyltransferase B (429 aa).

Residues 254 to 260 (CAAPGGK), D277, D303, and D322 each bind S-adenosyl-L-methionine. The Nucleophile role is filled by C375.

The protein belongs to the class I-like SAM-binding methyltransferase superfamily. RsmB/NOP family.

Its subcellular location is the cytoplasm. The catalysed reaction is cytidine(967) in 16S rRNA + S-adenosyl-L-methionine = 5-methylcytidine(967) in 16S rRNA + S-adenosyl-L-homocysteine + H(+). Functionally, specifically methylates the cytosine at position 967 (m5C967) of 16S rRNA. In Shigella boydii serotype 18 (strain CDC 3083-94 / BS512), this protein is Ribosomal RNA small subunit methyltransferase B.